We begin with the raw amino-acid sequence, 150 residues long: Small ribosomal subunit protein eS19 (150 aa).

This sequence belongs to the eukaryotic ribosomal protein eS19 family. Part of the 30S ribosomal subunit.

In terms of biological role, may be involved in maturation of the 30S ribosomal subunit. The polypeptide is Small ribosomal subunit protein eS19 (rps19e) (Pyrococcus abyssi (strain GE5 / Orsay)).